A 642-amino-acid chain; its full sequence is Assimilatory sulfite reductase (ferredoxin), chloroplastic (642 aa).

Residues 1–61 (MSSTFRAPAG…SSSSSSPIQA (61 aa)) constitute a chloroplast transit peptide. The tract at residues 46 to 74 (PVPPSASSSSSSPIQAVSTPAKPETATKR) is disordered. Cys-503, Cys-509, Cys-549, and Cys-553 together coordinate [4Fe-4S] cluster. Cys-553 provides a ligand contact to siroheme.

The protein belongs to the nitrite and sulfite reductase 4Fe-4S domain family. As to quaternary structure, monomer. Interacts with ferredoxin. Siroheme serves as cofactor. It depends on [4Fe-4S] cluster as a cofactor. Post-translationally, phosphorylated; this phosphorylation reduces DNA-binding. Present in leaves and roots.

The protein resides in the plastid. It is found in the chloroplast stroma. It localises to the chloroplast nucleoid. The protein localises to the plastid stroma. The catalysed reaction is hydrogen sulfide + 6 oxidized [2Fe-2S]-[ferredoxin] + 3 H2O = sulfite + 6 reduced [2Fe-2S]-[ferredoxin] + 7 H(+). Its function is as follows. Essential protein with sulfite reductase activity required in assimilatory sulfate reduction pathway during both primary and secondary metabolism and thus involved in development and growth. DNA-binding protein that binds to both double-stranded and single-stranded DNA without significant sequence specificity to reversibly repress the transcriptional activity of chloroplast nucleoids by promoting DNA compaction and possibly regulate DNA replication. The chain is Assimilatory sulfite reductase (ferredoxin), chloroplastic (SIR) from Arabidopsis thaliana (Mouse-ear cress).